The following is a 350-amino-acid chain: Phenylalanine--tRNA ligase alpha subunit (350 aa).

E257 is a binding site for Mg(2+).

The protein belongs to the class-II aminoacyl-tRNA synthetase family. Phe-tRNA synthetase alpha subunit type 1 subfamily. In terms of assembly, tetramer of two alpha and two beta subunits. It depends on Mg(2+) as a cofactor.

The protein localises to the cytoplasm. It carries out the reaction tRNA(Phe) + L-phenylalanine + ATP = L-phenylalanyl-tRNA(Phe) + AMP + diphosphate + H(+). The polypeptide is Phenylalanine--tRNA ligase alpha subunit (Listeria monocytogenes serovar 1/2a (strain ATCC BAA-679 / EGD-e)).